The sequence spans 455 residues: Glutamyl-tRNA(Gln) amidotransferase subunit A (455 aa).

Active-site charge relay system residues include K74 and S149. Catalysis depends on S173, which acts as the Acyl-ester intermediate.

The protein belongs to the amidase family. GatA subfamily. In terms of assembly, heterotrimer of A, B and C subunits.

The catalysed reaction is L-glutamyl-tRNA(Gln) + L-glutamine + ATP + H2O = L-glutaminyl-tRNA(Gln) + L-glutamate + ADP + phosphate + H(+). In terms of biological role, allows the formation of correctly charged Gln-tRNA(Gln) through the transamidation of misacylated Glu-tRNA(Gln) in organisms which lack glutaminyl-tRNA synthetase. The reaction takes place in the presence of glutamine and ATP through an activated gamma-phospho-Glu-tRNA(Gln). The polypeptide is Glutamyl-tRNA(Gln) amidotransferase subunit A (Methanosphaera stadtmanae (strain ATCC 43021 / DSM 3091 / JCM 11832 / MCB-3)).